A 23-amino-acid polypeptide reads, in one-letter code: Coenzyme PQQ synthesis protein A (23 aa).

Positions 15–19 form a cross-link, pyrroloquinoline quinone (Glu-Tyr); the sequence is EVTLY.

Belongs to the PqqA family.

Its pathway is cofactor biosynthesis; pyrroloquinoline quinone biosynthesis. Required for coenzyme pyrroloquinoline quinone (PQQ) biosynthesis. PQQ is probably formed by cross-linking a specific glutamate to a specific tyrosine residue and excising these residues from the peptide. The protein is Coenzyme PQQ synthesis protein A of Klebsiella pneumoniae (strain 342).